Reading from the N-terminus, the 260-residue chain is Deoxyribonuclease-1 (260 aa).

Asparagine 18 carries an N-linked (GlcNAc...) asparagine glycan. The active site involves glutamate 78. Cysteines 101 and 104 form a disulfide. Histidine 134 is an active-site residue. Residues cysteine 173 and cysteine 209 are joined by a disulfide bond.

It belongs to the DNase I family. Requires Ca(2+) as cofactor. The cofactor is Mg(2+).

The protein localises to the secreted. Its subcellular location is the zymogen granule. It localises to the nucleus envelope. It catalyses the reaction Endonucleolytic cleavage to 5'-phosphodinucleotide and 5'-phosphooligonucleotide end-products.. Its function is as follows. Serum endocuclease secreted into body fluids by a wide variety of exocrine and endocrine organs. Expressed by non-hematopoietic tissues and preferentially cleaves protein-free DNA. Among other functions, seems to be involved in cell death by apoptosis. Binds specifically to G-actin and blocks actin polymerization. Together with DNASE1L3, plays a key role in degrading neutrophil extracellular traps (NETs). NETs are mainly composed of DNA fibers and are released by neutrophils to bind pathogens during inflammation. Degradation of intravascular NETs by DNASE1 and DNASE1L3 is required to prevent formation of clots that obstruct blood vessels and cause organ damage following inflammation. This chain is Deoxyribonuclease-1 (DNASE1), found in Ovis aries (Sheep).